Here is a 101-residue protein sequence, read N- to C-terminus: Ferredoxin-3 (101 aa).

2 consecutive 4Fe-4S ferredoxin-type domains span residues 17–46 (YLMK…LHGL) and 70–100 (KVMA…HAAL). [4Fe-4S] cluster is bound by residues Cys26, Cys29, Cys32, Cys36, Cys80, Cys83, Cys86, and Cys90.

As to quaternary structure, homodimer. It depends on [4Fe-4S] cluster as a cofactor.

In terms of biological role, ferredoxins are iron-sulfur proteins that transfer electrons in a wide variety of metabolic reactions. This Rhodobacter capsulatus (Rhodopseudomonas capsulata) protein is Ferredoxin-3 (fdxB).